Consider the following 196-residue polypeptide: Calmodulin-like protein 4 (196 aa).

A disordered region spans residues 1–43 (MAAEHLLPGPPPSLADFRLEAGGKGTERGSGSSKPTGSSRGPR). Basic and acidic residues predominate over residues 17–27 (FRLEAGGKGTE). Residues 29–39 (GSGSSKPTGSS) show a composition bias toward polar residues. 4 consecutive EF-hand domains span residues 51-86 (DQIN…LGAS), 87-122 (PTPG…QIKQ), 124-159 (DPKK…LGEK), and 160-195 (LTHK…PGRD).

It belongs to the calmodulin family. Interacts with MYO7B; the interaction mediates the association of CALML4 with the IMAC/intermicrovillar adhesion complex. Interacts with MYO7A. Expressed in the intestinal tract. As to expression, dominant transcript in the intestinal tract.

It localises to the cell projection. The protein localises to the microvillus. In terms of biological role, as part of the intermicrovillar adhesion complex/IMAC plays a role in epithelial brush border differentiation, controlling microvilli organization and length. Acts as a light chain for MYO7B and is required for efficient targeting of the IMAC to the tips of border brush microvilli. The sequence is that of Calmodulin-like protein 4 from Homo sapiens (Human).